We begin with the raw amino-acid sequence, 343 residues long: tRNA N6-adenosine threonylcarbamoyltransferase (343 aa).

The Fe cation site is built by histidine 120 and histidine 124. Substrate contacts are provided by residues 142-146, aspartate 175, glycine 188, aspartate 192, and asparagine 281; that span reads VVSGG. Aspartate 310 is a binding site for Fe cation.

Belongs to the KAE1 / TsaD family. Fe(2+) serves as cofactor.

Its subcellular location is the cytoplasm. It carries out the reaction L-threonylcarbamoyladenylate + adenosine(37) in tRNA = N(6)-L-threonylcarbamoyladenosine(37) in tRNA + AMP + H(+). In terms of biological role, required for the formation of a threonylcarbamoyl group on adenosine at position 37 (t(6)A37) in tRNAs that read codons beginning with adenine. Is involved in the transfer of the threonylcarbamoyl moiety of threonylcarbamoyl-AMP (TC-AMP) to the N6 group of A37, together with TsaE and TsaB. TsaD likely plays a direct catalytic role in this reaction. The protein is tRNA N6-adenosine threonylcarbamoyltransferase of Bacillus thuringiensis (strain Al Hakam).